Consider the following 262-residue polypeptide: Caffeyl-CoA reductase-Etf complex subunit CarD (262 aa).

It belongs to the ETF beta-subunit/FixA family. In terms of assembly, part of the homotrimeric caffeyl-CoA reductase-Etf complex composed of (R)-2-hydroxyisocaproyl-CoA dehydratase CarC, and the electron transfer flavoprotein (ETF) alpha (CarE) and beta (CarD) subunits. FAD is required as a cofactor. The cofactor is AMP.

It is found in the cytoplasm. It carries out the reaction hydrocaffeoyl-CoA + 2 reduced [2Fe-2S]-[ferredoxin] + 2 NAD(+) = (E)-caffeoyl-CoA + 2 oxidized [2Fe-2S]-[ferredoxin] + 2 NADH. Caffeyl-CoA reductase-Etf complex catalyzes the reduction of caffeyl-CoA to yield hydrocaffeyl-CoA. It couples the endergonic ferredoxin reduction with NADH as reductant to the exergonic reduction of caffeoyl-CoA with the same reductant. It uses the mechanism of electron bifurcation to overcome the steep energy barrier in ferredoxin reduction. The electron transfer flavoprotein (Etf) mediates the electron transfer between the different donors and acceptors. The complex can also reduce 4-coumaroyl-CoA and feruloyl-CoA. This is Caffeyl-CoA reductase-Etf complex subunit CarD from Acetobacterium woodii (strain ATCC 29683 / DSM 1030 / JCM 2381 / KCTC 1655 / WB1).